Reading from the N-terminus, the 219-residue chain is Peptide methionine sulfoxide reductase MsrA (219 aa).

The active site involves Cys-58.

Belongs to the MsrA Met sulfoxide reductase family.

It catalyses the reaction L-methionyl-[protein] + [thioredoxin]-disulfide + H2O = L-methionyl-(S)-S-oxide-[protein] + [thioredoxin]-dithiol. The catalysed reaction is [thioredoxin]-disulfide + L-methionine + H2O = L-methionine (S)-S-oxide + [thioredoxin]-dithiol. Has an important function as a repair enzyme for proteins that have been inactivated by oxidation. Catalyzes the reversible oxidation-reduction of methionine sulfoxide in proteins to methionine. This chain is Peptide methionine sulfoxide reductase MsrA, found in Ectopseudomonas mendocina (strain ymp) (Pseudomonas mendocina).